A 299-amino-acid polypeptide reads, in one-letter code: Apolipoprotein E (299 aa).

An N-terminal signal peptide occupies residues 1–18 (MKVLCTVLVVTLLAGCQA). An 8 X 22 AA approximate tandem repeats region spans residues 74–245 (VLMEDTMKAV…RLEEVREQME (172 aa)). A run of 8 repeats spans residues 75–95 (LMED…QELV), 96–117 (PMAE…ARLG), 118–139 (ADME…AMLG), 140–161 (QSAE…KKLL), 162–183 (RDAE…EGAE), 184–206 (RSVS…RAAL), 207–225 (TSQP…LRGR), and 224–242 (GRLE…EVRE). Methionine 137 is subject to Methionine sulfoxide. Position 141 is a phosphoserine (serine 141). The LDL and other lipoprotein receptors binding stretch occupies residues 152–162 (HLRKLRKKLLR). 156–159 (LRKK) provides a ligand contact to heparin. The interval 205-273 (ALTSQPLQER…GWFEPMVEDM (69 aa)) is lipid-binding and lipoprotein association. Residue 219–226 (GKRLRGRL) coordinates heparin. Residues 261–273 (RLKGWFEPMVEDM) form a specificity for association with VLDL region.

This sequence belongs to the apolipoprotein A1/A4/E family. In terms of assembly, homotetramer. May interact with ABCA1; functionally associated with ABCA1 in the biogenesis of HDLs. May interact with APP/A4 amyloid-beta peptide; the interaction is extremely stable in vitro but its physiological significance is unclear. May interact with MAPT. May interact with MAP2. In the cerebrospinal fluid, interacts with secreted SORL1. Interacts with PMEL; this allows the loading of PMEL luminal fragment on ILVs to induce fibril nucleation. In terms of processing, APOE exists as multiple glycosylated and sialylated glycoforms within cells and in plasma. The extent of glycosylation and sialylation are tissue and context specific. Glycated in plasma VLDL. Post-translationally, phosphorylated by FAM20C in the extracellular medium.

The protein localises to the secreted. It is found in the extracellular space. The protein resides in the extracellular matrix. Its subcellular location is the extracellular vesicle. It localises to the endosome. The protein localises to the multivesicular body. Its function is as follows. APOE is an apolipoprotein, a protein associating with lipid particles, that mainly functions in lipoprotein-mediated lipid transport between organs via the plasma and interstitial fluids. APOE is a core component of plasma lipoproteins and is involved in their production, conversion and clearance. Apolipoproteins are amphipathic molecules that interact both with lipids of the lipoprotein particle core and the aqueous environment of the plasma. As such, APOE associates with chylomicrons, chylomicron remnants, very low density lipoproteins (VLDL) and intermediate density lipoproteins (IDL) but shows a preferential binding to high-density lipoproteins (HDL). It also binds a wide range of cellular receptors including the LDL receptor/LDLR, the LDL receptor-related proteins LRP1, LRP2 and LRP8 and the very low-density lipoprotein receptor/VLDLR that mediate the cellular uptake of the APOE-containing lipoprotein particles. Finally, APOE also has a heparin-binding activity and binds heparan-sulfate proteoglycans on the surface of cells, a property that supports the capture and the receptor-mediated uptake of APOE-containing lipoproteins by cells. A main function of APOE is to mediate lipoprotein clearance through the uptake of chylomicrons, VLDLs, and HDLs by hepatocytes. APOE is also involved in the biosynthesis by the liver of VLDLs as well as their uptake by peripheral tissues ensuring the delivery of triglycerides and energy storage in muscle, heart and adipose tissues. By participating in the lipoprotein-mediated distribution of lipids among tissues, APOE plays a critical role in plasma and tissues lipid homeostasis. APOE is also involved in two steps of reverse cholesterol transport, the HDLs-mediated transport of cholesterol from peripheral tissues to the liver, and thereby plays an important role in cholesterol homeostasis. First, it is functionally associated with ABCA1 in the biogenesis of HDLs in tissues. Second, it is enriched in circulating HDLs and mediates their uptake by hepatocytes. APOE also plays an important role in lipid transport in the central nervous system, regulating neuron survival and sprouting. The protein is Apolipoprotein E (APOE) of Ctenomys sociabilis (Social tuco-tuco).